The chain runs to 110 residues: Phosphoribosyl-ATP pyrophosphatase (110 aa).

It belongs to the PRA-PH family.

The protein resides in the cytoplasm. The enzyme catalyses 1-(5-phospho-beta-D-ribosyl)-ATP + H2O = 1-(5-phospho-beta-D-ribosyl)-5'-AMP + diphosphate + H(+). It functions in the pathway amino-acid biosynthesis; L-histidine biosynthesis; L-histidine from 5-phospho-alpha-D-ribose 1-diphosphate: step 2/9. This chain is Phosphoribosyl-ATP pyrophosphatase, found in Pseudomonas fluorescens (strain SBW25).